A 331-amino-acid polypeptide reads, in one-letter code: ADP,ATP carrier protein 1, mitochondrial (331 aa).

Solcar repeat units follow at residues 29 to 122 (KNFA…FKRM), 134 to 226 (KWFG…LKPV), and 238 to 320 (ASFA…LQIL). The next 5 helical transmembrane spans lie at 31–58 (FAID…VKLL), 99–123 (TANV…KRMF), 132–152 (YWKW…SSLF), 202–223 (FNIS…YDSL), and 237–257 (FASF…SYPI). The ADP site is built by Arg104 and Lys116. Arg261 serves as a coordination point for ADP. The segment at 261–266 (RRRMMM) is important for transport activity. The short motif at 261-266 (RRRMMM) is the Nucleotide carrier signature motif element. Residues 297-317 (AGANILRAIAGAGVLSGYDQL) form a helical membrane-spanning segment.

It belongs to the mitochondrial carrier (TC 2.A.29) family. As to quaternary structure, monomer.

The protein resides in the mitochondrion inner membrane. The catalysed reaction is ADP(in) + ATP(out) = ADP(out) + ATP(in). Its activity is regulated as follows. The matrix-open state (m-state) is inhibited by the membrane-permeable bongkrekic acid (BKA). The cytoplasmic-open state (c-state) is inhibited by the membrane-impermeable toxic inhibitor carboxyatractyloside (CATR). ADP:ATP antiporter that mediates import of ADP into the mitochondrial matrix for ATP synthesis, and export of ATP out to fuel the cell. Cycles between the cytoplasmic-open state (c-state) and the matrix-open state (m-state): operates by the alternating access mechanism with a single substrate-binding site intermittently exposed to either the cytosolic (c-state) or matrix (m-state) side of the inner mitochondrial membrane. The chain is ADP,ATP carrier protein 1, mitochondrial (ANT-G1) from Triticum aestivum (Wheat).